Here is a 437-residue protein sequence, read N- to C-terminus: GTPase Der (437 aa).

2 EngA-type G domains span residues 3-167 and 176-352; these read NIVA…TKKV and PAIA…DIRQ. GTP contacts are provided by residues 9–16, 56–60, 119–122, 182–189, 229–233, and 294–297; these read GRPNVGKS, DTGGW, NKAD, GKPNVGKS, DTAGI, and NKWD. The 85-residue stretch at 353-437 folds into the KH-like domain; the sequence is IKIPTSQLNR…TPINIFMREK (85 aa).

The protein belongs to the TRAFAC class TrmE-Era-EngA-EngB-Septin-like GTPase superfamily. EngA (Der) GTPase family. In terms of assembly, associates with the 50S ribosomal subunit.

Its function is as follows. GTPase that plays an essential role in the late steps of ribosome biogenesis. This is GTPase Der from Azobacteroides pseudotrichonymphae genomovar. CFP2.